We begin with the raw amino-acid sequence, 407 residues long: Phosphopentomutase (407 aa).

6 residues coordinate Mn(2+): D11, D305, H310, D346, H347, and H358.

This sequence belongs to the phosphopentomutase family. The cofactor is Mn(2+).

Its subcellular location is the cytoplasm. The enzyme catalyses 2-deoxy-alpha-D-ribose 1-phosphate = 2-deoxy-D-ribose 5-phosphate. It carries out the reaction alpha-D-ribose 1-phosphate = D-ribose 5-phosphate. It participates in carbohydrate degradation; 2-deoxy-D-ribose 1-phosphate degradation; D-glyceraldehyde 3-phosphate and acetaldehyde from 2-deoxy-alpha-D-ribose 1-phosphate: step 1/2. Functionally, isomerase that catalyzes the conversion of deoxy-ribose 1-phosphate (dRib-1-P) and ribose 1-phosphate (Rib-1-P) to deoxy-ribose 5-phosphate (dRib-5-P) and ribose 5-phosphate (Rib-5-P), respectively. The protein is Phosphopentomutase of Legionella pneumophila subsp. pneumophila (strain Philadelphia 1 / ATCC 33152 / DSM 7513).